Reading from the N-terminus, the 463-residue chain is Glutamate--tRNA ligase 1 (463 aa).

The short motif at 10-20 (PSPTGYLHIGG) is the 'HIGH' region element. The 'KMSKS' region signature appears at 238–242 (KLSKR). Residue lysine 241 coordinates ATP.

This sequence belongs to the class-I aminoacyl-tRNA synthetase family. Glutamate--tRNA ligase type 1 subfamily. As to quaternary structure, monomer.

It is found in the cytoplasm. It catalyses the reaction tRNA(Glu) + L-glutamate + ATP = L-glutamyl-tRNA(Glu) + AMP + diphosphate. Functionally, catalyzes the attachment of glutamate to tRNA(Glu) in a two-step reaction: glutamate is first activated by ATP to form Glu-AMP and then transferred to the acceptor end of tRNA(Glu). This chain is Glutamate--tRNA ligase 1, found in Helicobacter pylori (strain P12).